A 69-amino-acid chain; its full sequence is Cold shock-like protein CspC (69 aa).

A CSD domain is found at 6–66; that stretch reads GQVKWFNESK…GQKGPAAVNV (61 aa).

It is found in the cytoplasm. The chain is Cold shock-like protein CspC (cspC) from Buchnera aphidicola subsp. Acyrthosiphon pisum (strain APS) (Acyrthosiphon pisum symbiotic bacterium).